The chain runs to 237 residues: Phosphoribosylaminoimidazole-succinocarboxamide synthase (237 aa).

Belongs to the SAICAR synthetase family.

The catalysed reaction is 5-amino-1-(5-phospho-D-ribosyl)imidazole-4-carboxylate + L-aspartate + ATP = (2S)-2-[5-amino-1-(5-phospho-beta-D-ribosyl)imidazole-4-carboxamido]succinate + ADP + phosphate + 2 H(+). It participates in purine metabolism; IMP biosynthesis via de novo pathway; 5-amino-1-(5-phospho-D-ribosyl)imidazole-4-carboxamide from 5-amino-1-(5-phospho-D-ribosyl)imidazole-4-carboxylate: step 1/2. The polypeptide is Phosphoribosylaminoimidazole-succinocarboxamide synthase (Pseudomonas fluorescens (strain ATCC BAA-477 / NRRL B-23932 / Pf-5)).